Consider the following 257-residue polypeptide: Type I iodothyronine deiodinase (257 aa).

Residues 1–12 (MGLPGLGLLLKR) are Extracellular-facing. A helical; Signal-anchor for type III membrane protein membrane pass occupies residues 13 to 33 (FGVLVRVALKVAVGKVLLTLW). The Cytoplasmic segment spans residues 34–257 (PSAIRPHLLA…CRSSAQSPRL (224 aa)). The active site involves Sec-126. Residue Sec-126 is a non-standard amino acid, selenocysteine.

It belongs to the iodothyronine deiodinase family. In terms of assembly, predominantly monomer. Can form homodimers but homodimerization is not essential for enzyme activity. In terms of tissue distribution, liver specific.

The protein resides in the cell membrane. Its subcellular location is the endoplasmic reticulum membrane. It is found in the basolateral cell membrane. It carries out the reaction 3,3',5-triiodo-L-thyronine + iodide + A + H(+) = L-thyroxine + AH2. The enzyme catalyses 3,3',5'-triiodo-L-thyronine + iodide + A + H(+) = L-thyroxine + AH2. It catalyses the reaction 3,3'-diiodo-L-thyronine + iodide + A + H(+) = 3,3',5'-triiodo-L-thyronine + AH2. The catalysed reaction is 3,3'-diiodo-L-thyronine + iodide + A + H(+) = 3,3',5-triiodo-L-thyronine + AH2. It carries out the reaction 3'-iodo-L-thyronine + iodide + A + H(+) = 3',5'-diiodo-L-thyronine + AH2. The enzyme catalyses 3-iodo-L-thyronine + iodide + A + H(+) = 3,5-diiodo-L-thyronine + AH2. It catalyses the reaction 3-iodo-L-thyronine + iodide + A + H(+) = 3,3'-diiodo-L-thyronine + AH2. The catalysed reaction is 3,3'-diiodothyronamine + iodide + A + H(+) = 3,3',5'-triiodothyronamine + AH2. It carries out the reaction 3'-iodothyronamine + iodide + A + H(+) = 3',5'-diiodothyronamine + AH2. The enzyme catalyses 3-iodothyronamine + iodide + A + H(+) = 3,3'-diiodothyronamine + AH2. It catalyses the reaction 3,3'-diiodothyronamine + iodide + A + H(+) = 3,3',5-triiodothyronamine + AH2. The catalysed reaction is 3-iodothyronamine + iodide + A + H(+) = 3,5-diiodothyronamine + AH2. It carries out the reaction 3,3'-diiodo-L-thyronine sulfate + iodide + A + H(+) = 3,3',5'-triiodo-L-thyronine sulfate + AH2. The enzyme catalyses 3,3',5'-triiodo-L-thyronine sulfate + iodide + A + H(+) = L-thyroxine sulfate + AH2. It catalyses the reaction 3,3'-diiodo-L-thyronine sulfate + iodide + A + H(+) = 3,3',5-triiodo-L-thyronine sulfate + AH2. Its function is as follows. Plays a crucial role in the metabolism of thyroid hormones (TH) and has specific roles in TH activation and inactivation by deiodination. Catalyzes the deiodination of L-thyroxine (T4) to 3,5,3'-triiodothyronine (T3) and 3',5'-diiodothyronine (3',5'-T2) to 3'-monoiodothyronine (3'-T1) via outer-ring deiodination (ORD). Catalyzes the deiodination of T4 to 3,3',5'-triiodothyronine (rT3), T3 to 3,3'-diiodothyronine (3,3'-T2), 3,5-diiodothyronine (3,5-T2) to 3-monoiodothyronine (3-T1) and 3,3'-T2 to 3-T1 via inner-ring deiodination (IRD). Catalyzes the deiodination of rT3 to 3,3'-T2 via ORD. Catalyzes the phenolic ring deiodinations of 3,3',5'-triiodothyronamine, 3',5'-diiodothyronamine and 3,3'-diiodothyronamine as well as tyrosyl ring deiodinations of 3,5,3'-triiodothyronamine and 3,5-diiodothyronamine. Catalyzes the deiodination of L-thyroxine sulfate and 3,3',5-triiodo-L-thyronine sulfate via IRD and of 3,3',5'-triiodo-L-thyronine sulfate via ORD. This is Type I iodothyronine deiodinase (DIO1) from Suncus murinus (Asian house shrew).